The primary structure comprises 95 residues: Large ribosomal subunit protein bL25 (95 aa).

This sequence belongs to the bacterial ribosomal protein bL25 family. In terms of assembly, part of the 50S ribosomal subunit; part of the 5S rRNA/L5/L18/L25 subcomplex. Contacts the 5S rRNA. Binds to the 5S rRNA independently of L5 and L18.

Functionally, this is one of the proteins that binds to the 5S RNA in the ribosome where it forms part of the central protuberance. This Shewanella sediminis (strain HAW-EB3) protein is Large ribosomal subunit protein bL25.